The sequence spans 356 residues: MKILEKDLRKGYLKILPEDQDDLWALYNIIKPLDRVTATTSRDIKHGETSSSRRIPMTLTIEVKTLEFQPFTERLRIRGIVVEGPERYGVKGHYHTLNIEPGKPLIIWKEKWSENELEIISRFTSRKQKVLLATFDYDEAAIALLTEQGIRLLEEFTSNIPGKREPVLFQKGLEKYLSSIAEKILDYINKFQVDIVVIASPGDLQKRVARIIKEKKPVNIITDTVSIGGQSGIRELLRRDSVREAVKETNIIKAQRILDEFHKNLSKNPDMVAYGIDDVEYAVKYNAVDKLLVSEELLRIYDEEVRRRVSSILNEAYKRRAEIIIVPHNSDVGLEVEGLGGIVALLRYPLKKPLNN.

Belongs to the eukaryotic release factor 1 family. Pelota subfamily. In terms of assembly, monomer. The cofactor is a divalent metal cation.

It localises to the cytoplasm. May function in recognizing stalled ribosomes, interact with stem-loop structures in stalled mRNA molecules, and effect endonucleolytic cleavage of the mRNA. May play a role in the release non-functional ribosomes and degradation of damaged mRNAs. Has endoribonuclease activity. This chain is Protein pelota homolog, found in Staphylothermus marinus (strain ATCC 43588 / DSM 3639 / JCM 9404 / F1).